The primary structure comprises 98 residues: NADH-ubiquinone oxidoreductase chain 4L (98 aa).

Transmembrane regions (helical) follow at residues 1–21, 26–46, and 61–81; these read MPSI…GVLI, LMSS…LVSL, and IILL…LVMV.

This sequence belongs to the complex I subunit 4L family. As to quaternary structure, core subunit of respiratory chain NADH dehydrogenase (Complex I) which is composed of 45 different subunits.

It is found in the mitochondrion inner membrane. The catalysed reaction is a ubiquinone + NADH + 5 H(+)(in) = a ubiquinol + NAD(+) + 4 H(+)(out). Its function is as follows. Core subunit of the mitochondrial membrane respiratory chain NADH dehydrogenase (Complex I) which catalyzes electron transfer from NADH through the respiratory chain, using ubiquinone as an electron acceptor. Part of the enzyme membrane arm which is embedded in the lipid bilayer and involved in proton translocation. This Galago senegalensis (Northern lesser bushbaby) protein is NADH-ubiquinone oxidoreductase chain 4L (MT-ND4L).